A 162-amino-acid polypeptide reads, in one-letter code: Transcription elongation factor GreA (162 aa).

Residues 46 to 77 are a coiled coil; that stretch reads RENAEYKAAREEQTRLNNMVTRLQEEIERAQV.

Belongs to the GreA/GreB family.

In terms of biological role, necessary for efficient RNA polymerase transcription elongation past template-encoded arresting sites. The arresting sites in DNA have the property of trapping a certain fraction of elongating RNA polymerases that pass through, resulting in locked ternary complexes. Cleavage of the nascent transcript by cleavage factors such as GreA or GreB allows the resumption of elongation from the new 3'terminus. GreA releases sequences of 2 to 3 nucleotides. This Treponema pallidum (strain Nichols) protein is Transcription elongation factor GreA.